A 121-amino-acid polypeptide reads, in one-letter code: MFDESDLVYSKEHEWVFIDDDIAWVGITKYAVKKLGDIVYIDLPSQDALIVQGECVGEIESTKSVSEIYSPVSGRVIAVNEDVISSPGLLNSDSSVWLFKAECENIPELMDWGQYSEYTKE.

Residues 22–102 (IAWVGITKYA…DSSVWLFKAE (81 aa)) enclose the Lipoyl-binding domain. At Lys63 the chain carries N6-lipoyllysine.

It belongs to the GcvH family. The glycine cleavage system is composed of four proteins: P, T, L and H. It depends on (R)-lipoate as a cofactor.

The glycine cleavage system catalyzes the degradation of glycine. The H protein shuttles the methylamine group of glycine from the P protein to the T protein. The chain is Glycine cleavage system H protein from Tropheryma whipplei (strain TW08/27) (Whipple's bacillus).